Consider the following 623-residue polypeptide: tRNA uridine 5-carboxymethylaminomethyl modification enzyme MnmG (623 aa).

12-17 (GAGHAG) is a binding site for FAD. Position 272–286 (272–286 (GPRYCPSIEDKINRF)) interacts with NAD(+).

This sequence belongs to the MnmG family. Homodimer. Heterotetramer of two MnmE and two MnmG subunits. FAD is required as a cofactor.

The protein resides in the cytoplasm. In terms of biological role, NAD-binding protein involved in the addition of a carboxymethylaminomethyl (cmnm) group at the wobble position (U34) of certain tRNAs, forming tRNA-cmnm(5)s(2)U34. This Flavobacterium johnsoniae (strain ATCC 17061 / DSM 2064 / JCM 8514 / BCRC 14874 / CCUG 350202 / NBRC 14942 / NCIMB 11054 / UW101) (Cytophaga johnsonae) protein is tRNA uridine 5-carboxymethylaminomethyl modification enzyme MnmG.